A 256-amino-acid polypeptide reads, in one-letter code: uncharacterized protein (256 aa).

Residues 1 to 22 (MGYLKRIGMCISLLIVIIFVTS) form the signal peptide. The N-palmitoyl cysteine moiety is linked to residue Cys-23. The S-diacylglycerol cysteine moiety is linked to residue Cys-23.

This sequence belongs to the staphylococcal tandem lipoprotein family.

It is found in the cell membrane. This is an uncharacterized protein from Staphylococcus aureus (strain MSSA476).